A 412-amino-acid chain; its full sequence is Glutamate-1-semialdehyde 2,1-aminomutase (412 aa).

Lysine 260 carries the N6-(pyridoxal phosphate)lysine modification.

This sequence belongs to the class-III pyridoxal-phosphate-dependent aminotransferase family. HemL subfamily. Requires pyridoxal 5'-phosphate as cofactor.

Its subcellular location is the cytoplasm. The catalysed reaction is (S)-4-amino-5-oxopentanoate = 5-aminolevulinate. It functions in the pathway porphyrin-containing compound metabolism; protoporphyrin-IX biosynthesis; 5-aminolevulinate from L-glutamyl-tRNA(Glu): step 2/2. In Methanocorpusculum labreanum (strain ATCC 43576 / DSM 4855 / Z), this protein is Glutamate-1-semialdehyde 2,1-aminomutase.